The following is a 146-amino-acid chain: Hemoglobin subunit beta (146 aa).

N-acetylvaline is present on Val-1. The Globin domain maps to 2-146 (HLTPEEKTAV…VANALAHKYH (145 aa)). Thr-12 carries the post-translational modification Phosphothreonine. Phosphoserine is present on Ser-44. Position 59 is an N6-acetyllysine (Lys-59). Residue His-63 participates in heme b binding. An N6-acetyllysine modification is found at Lys-82. Position 92 (His-92) interacts with heme b. Residue Cys-93 is modified to S-nitrosocysteine. The residue at position 144 (Lys-144) is an N6-acetyllysine.

The protein belongs to the globin family. In terms of assembly, heterotetramer of two alpha chains and two beta chains. As to expression, red blood cells.

Involved in oxygen transport from the lung to the various peripheral tissues. This chain is Hemoglobin subunit beta (HBB), found in Chlorocebus aethiops (Green monkey).